The chain runs to 419 residues: Protein indeterminate-domain 14 (419 aa).

A disordered region spans residues 1–58 (MIDYERSNTTKNINTHHHNPPPSSSSSDLLPDGNGTAVTQKRKRRPAGTPDPEAEVVS). C2H2-type zinc fingers lie at residues 70 to 92 (YVCEICNQGFQRDQNLQMHRRRH), 112 to 142 (YVCPEPTCLHHNPCHALGDLVGIKKHFRRKH), and 148 to 175 (WICERCSKGYAVQSDYKAHLKTCGTRGH). 8 residues coordinate Zn(2+): Cys-150, Cys-153, His-166, Cys-170, Cys-177, Cys-179, His-192, and Cys-196. The CCHC-type 2; atypical zinc finger occupies 175–198 (HSCDCGRVFSRVESFIEHQDTCTV). Positions 185 to 197 (RVESFIEHQDTCT) are SHR-binding. Disordered stretches follow at residues 200–259 (RSQP…PSTL) and 298–318 (SEVEKKSYEKGETSLEREEAR). Low complexity-rich tracts occupy residues 213–230 (QHTTNATQTASTAENNEN) and 246–259 (RRQSPPSEQQPSTL). Residues 313–349 (EREEARRETKRQIEIAELEFAEAKRIRQHARAELHKA) adopt a coiled-coil conformation.

As to quaternary structure, homo- and heterodimer of IDD14alpha and IDD14beta. As to expression, expressed in cotyledons and the vasculature of reosette leaves. Weak expression in hypocotyls and floral organs, but not detected in roots and inflorescence stems.

It is found in the nucleus. Transcription factor regulating starch metabolism by binding directly to the promoter of QQS. The IDD14beta isoform attenuates the transcription factor activity by competitively forming heterodimers with reduced DNA-binding capacity. Regulates lateral organ morphogenesis and gravitropic responses. Has a redundant role with IDD16 in directing leaf and floral organ morphogenesis. Involved in the establishment of auxin gradients through the regulation of auxin biosynthesis and transport. In Arabidopsis thaliana (Mouse-ear cress), this protein is Protein indeterminate-domain 14.